The following is a 320-amino-acid chain: Dimethyladenosine transferase (320 aa).

Positions 38, 40, 65, 86, 114, and 129 each coordinate S-adenosyl-L-methionine.

The protein belongs to the class I-like SAM-binding methyltransferase superfamily. rRNA adenine N(6)-methyltransferase family.

It catalyses the reaction adenosine(1779)/adenosine(1780) in 18S rRNA + 4 S-adenosyl-L-methionine = N(6)-dimethyladenosine(1779)/N(6)-dimethyladenosine(1780) in 18S rRNA + 4 S-adenosyl-L-homocysteine + 4 H(+). Its function is as follows. Specifically dimethylates two adjacent adenosines in the loop of a conserved hairpin near the 3'-end of 18S rRNA in the 40S particle. The sequence is that of Dimethyladenosine transferase (DIM1) from Kluyveromyces lactis (strain ATCC 8585 / CBS 2359 / DSM 70799 / NBRC 1267 / NRRL Y-1140 / WM37) (Yeast).